A 291-amino-acid polypeptide reads, in one-letter code: Small ribosomal subunit protein uS2 (291 aa).

The segment at 235–291 (NLQEDEESGDSGVDPYQDREEEITDYSNYTPKDEASGDDEDEEDNSLVNDEDLYDDK) is disordered. Residues 270 to 291 (SGDDEDEEDNSLVNDEDLYDDK) are compositionally biased toward acidic residues.

The protein belongs to the universal ribosomal protein uS2 family.

The sequence is that of Small ribosomal subunit protein uS2 from Treponema denticola (strain ATCC 35405 / DSM 14222 / CIP 103919 / JCM 8153 / KCTC 15104).